Here is a 225-residue protein sequence, read N- to C-terminus: mRNA-decapping protein D10 (225 aa).

Positions 35-218 constitute a Nudix hydrolase domain; sequence AKYPLSVIGI…NVIKYIINAV (184 aa). Positions 116-137 match the Nudix box motif; that stretch reads GKIKDLESITNCLVREIKEELN. Glutamate 122 contributes to the Mg(2+) binding site. Glutamate 131 functions as the Nucleophile in the catalytic mechanism. A Mn(2+)-binding site is contributed by glutamate 135. Residue aspartate 157 coordinates Mg(2+).

It belongs to the Nudix hydrolase family. It depends on Mg(2+) as a cofactor. Mn(2+) is required as a cofactor.

Functionally, decapping enzyme required for the removal of the 5'-end m7GpppN cap tethered to viral and host mRNAs to allow their decay in cells. May therefore accelerate viral and cellular mRNA turnover to eliminate competing host mRNAs and allow stage-specific synthesis of viral proteins. Acceleration of the turnover of cellular transcripts may even promote the shutoff of host protein synthesis. The sequence is that of mRNA-decapping protein D10 from Fowlpox virus (strain NVSL) (FPV).